The sequence spans 135 residues: ATP synthase epsilon chain, chloroplastic (135 aa).

The protein belongs to the ATPase epsilon chain family. F-type ATPases have 2 components, CF(1) - the catalytic core - and CF(0) - the membrane proton channel. CF(1) has five subunits: alpha(3), beta(3), gamma(1), delta(1), epsilon(1). CF(0) has three main subunits: a, b and c.

Its subcellular location is the plastid. It is found in the chloroplast thylakoid membrane. In terms of biological role, produces ATP from ADP in the presence of a proton gradient across the membrane. The chain is ATP synthase epsilon chain, chloroplastic from Euglena gracilis.